The following is a 439-amino-acid chain: Protein ABHD8 (439 aa).

Disordered stretches follow at residues 49-70 (AGPA…AAQG) and 124-156 (PAGS…RPKR). The span at 136–145 (AGSGSGSGSG) shows a compositional bias: gly residues. The span at 146–156 (GRRRRARRPKR) shows a compositional bias: basic residues. One can recognise an AB hydrolase-1 domain in the interval 177–279 (VLFFIHGVGG…HKVIMINGGG (103 aa)). Catalysis depends on charge relay system residues S252, D370, and H398.

This sequence belongs to the AB hydrolase superfamily. In terms of assembly, interacts with NLRP3 (via NACHT and LLR domains); this interaction is enhanced in the presence of NLRP3 inflammasome inducers, such as ATP, nigericin, silica, or alum. Interacts with ZDHHC12. As to quaternary structure, (Microbial infection) Interacts with SARS-CoV-2 nucleoprotein N; this interaction disrupts the NLRP3-ABHD8 association, enhancing NLRP3 stability, ultimately leading to increased inflammasome activation.

The protein resides in the cytoplasm. Functionally, negatively regulates NLRP3-driven inflammation. Promotes NLRP3 degradation through the chaperone-mediated autophagy (CMA) pathway, hence attenuating inflammasome activation and IL1B secretion. Acts by recruiting palmitoyltransferase ZDHHC12 to NLRP3, facilitating NLRP3 palmitoylation and subsequent degradation. The polypeptide is Protein ABHD8 (Homo sapiens (Human)).